The following is a 422-amino-acid chain: G2/mitotic-specific cyclin-A (422 aa).

The tract at residues 1-29 (MSQPFALHHDGENQMQRRGKMNTRSNGLS) is disordered.

This sequence belongs to the cyclin family. Cyclin AB subfamily.

Its function is as follows. Essential for the control of the cell cycle at the G2/M (mitosis) transition. Interacts with the CDC2 and CDK2 protein kinases to form MPF. G2/M cyclins accumulate steadily during G2 and are abruptly destroyed at mitosis. In Spisula solidissima (Atlantic surf-clam), this protein is G2/mitotic-specific cyclin-A.